The chain runs to 397 residues: Thioredoxin-interacting protein (397 aa).

A Glycyl lysine isopeptide (Lys-Gly) (interchain with G-Cter in ubiquitin) cross-link involves residue lysine 213. Serine 362 carries the phosphoserine modification.

The protein belongs to the arrestin family. Homodimer; disulfide-linked. Interacts with TXN/thioredoxin through its redox-active site. Interacts with transcriptional repressors ZBTB16, ZBTB32 and HDAC1. Interacts with DDIT4. Post-translationally, ubiquitinated; undergoes heterotypic 'Lys-48'-/'Lys-63'-branched polyubiquitination catalyzed by ITCH and UBR5 resulting in proteasomal degradation. Deubiquitinated by USP5, leading to TXNIP stabilization. Ubiquitously expressed.

The protein resides in the cytoplasm. Its function is as follows. May act as an oxidative stress mediator by inhibiting thioredoxin activity or by limiting its bioavailability. Interacts with COPS5 and restores COPS5-induced suppression of CDKN1B stability, blocking the COPS5-mediated translocation of CDKN1B from the nucleus to the cytoplasm. Functions as a transcriptional repressor, possibly by acting as a bridge molecule between transcription factors and corepressor complexes, and over-expression will induce G0/G1 cell cycle arrest. Required for the maturation of natural killer cells. Acts as a suppressor of tumor cell growth. Inhibits the proteasomal degradation of DDIT4, and thereby contributes to the inhibition of the mammalian target of rapamycin complex 1 (mTORC1). The polypeptide is Thioredoxin-interacting protein (Txnip) (Mus musculus (Mouse)).